The primary structure comprises 197 residues: Xanthine phosphoribosyltransferase (197 aa).

2 residues coordinate xanthine: Leu20 and Thr27. Residue 128–132 (ANGQA) participates in 5-phospho-alpha-D-ribose 1-diphosphate binding. A xanthine-binding site is contributed by Lys156.

It belongs to the purine/pyrimidine phosphoribosyltransferase family. Xpt subfamily. In terms of assembly, homodimer.

The protein localises to the cytoplasm. The enzyme catalyses XMP + diphosphate = xanthine + 5-phospho-alpha-D-ribose 1-diphosphate. Its pathway is purine metabolism; XMP biosynthesis via salvage pathway; XMP from xanthine: step 1/1. In terms of biological role, converts the preformed base xanthine, a product of nucleic acid breakdown, to xanthosine 5'-monophosphate (XMP), so it can be reused for RNA or DNA synthesis. The sequence is that of Xanthine phosphoribosyltransferase from Lactococcus lactis subsp. cremoris (strain MG1363).